The following is a 487-amino-acid chain: Signal recognition particle subunit SRP54 (487 aa).

Residues Met1–Leu295 are G-domain. GTP is bound by residues Gly108–Thr115, Asp190–Arg194, and Thr248–Asp251. The segment at Gly296 to Lys487 is M-domain.

This sequence belongs to the GTP-binding SRP family. SRP54 subfamily. In terms of assembly, component of a signal recognition particle (SRP) complex that consists of a 7SL RNA molecule of 300 nucleotides and six protein subunits: SRP72, SRP68, SRP54, SRP19, SRP14 and SRP9.

Its subcellular location is the cytoplasm. The protein localises to the endoplasmic reticulum. The enzyme catalyses GTP + H2O = GDP + phosphate + H(+). In terms of biological role, component of the signal recognition particle (SRP) complex, a ribonucleoprotein complex that mediates the cotranslational targeting of secretory and membrane proteins to the endoplasmic reticulum (ER). As part of the SRP complex, associates with the SRP receptor (SR) component SRPRA to target secretory proteins to the endoplasmic reticulum membrane. Binds to the signal sequence of presecretory proteins when they emerge from the ribosomes. Displays basal GTPase activity, and stimulates reciprocal GTPase activation of the SR subunit SRPRA. Forms a guanosine 5'-triphosphate (GTP)-dependent complex with the SR subunit SRPRA. SR compaction and GTPase mediated rearrangement of SR drive SRP-mediated cotranslational protein translocation into the ER. Requires the presence of SRP9/SRP14 and/or SRP19 to stably interact with RNA. This Entamoeba histolytica (strain ATCC 30459 / HM-1:IMSS / ABRM) protein is Signal recognition particle subunit SRP54.